We begin with the raw amino-acid sequence, 428 residues long: Histidinol dehydrogenase (428 aa).

NAD(+) is bound by residues Tyr-126, Gln-188, and Asn-211. Residues Ser-234, Gln-256, and His-259 each contribute to the substrate site. Zn(2+)-binding residues include Gln-256 and His-259. Active-site proton acceptor residues include Glu-324 and His-325. The substrate site is built by His-325, Asp-358, Glu-412, and His-417. Asp-358 is a Zn(2+) binding site. His-417 is a Zn(2+) binding site.

Belongs to the histidinol dehydrogenase family. Requires Zn(2+) as cofactor.

It catalyses the reaction L-histidinol + 2 NAD(+) + H2O = L-histidine + 2 NADH + 3 H(+). Its pathway is amino-acid biosynthesis; L-histidine biosynthesis; L-histidine from 5-phospho-alpha-D-ribose 1-diphosphate: step 9/9. Catalyzes the sequential NAD-dependent oxidations of L-histidinol to L-histidinaldehyde and then to L-histidine. This chain is Histidinol dehydrogenase, found in Chlorobaculum tepidum (strain ATCC 49652 / DSM 12025 / NBRC 103806 / TLS) (Chlorobium tepidum).